The sequence spans 474 residues: Ribulose bisphosphate carboxylase large chain (474 aa).

Lys-13 carries the post-translational modification N6,N6,N6-trimethyllysine. Residues Asn-122 and Thr-172 each contribute to the substrate site. Catalysis depends on Lys-174, which acts as the Proton acceptor. Lys-176 is a binding site for substrate. Lys-200, Asp-202, and Glu-203 together coordinate Mg(2+). Lys-200 is modified (N6-carboxylysine). His-293 serves as the catalytic Proton acceptor. Arg-294, His-326, and Ser-378 together coordinate substrate.

It belongs to the RuBisCO large chain family. Type I subfamily. Heterohexadecamer of 8 large chains and 8 small chains; disulfide-linked. The disulfide link is formed within the large subunit homodimers. Requires Mg(2+) as cofactor. In terms of processing, the disulfide bond which can form in the large chain dimeric partners within the hexadecamer appears to be associated with oxidative stress and protein turnover.

The protein localises to the plastid. It is found in the chloroplast. It carries out the reaction 2 (2R)-3-phosphoglycerate + 2 H(+) = D-ribulose 1,5-bisphosphate + CO2 + H2O. It catalyses the reaction D-ribulose 1,5-bisphosphate + O2 = 2-phosphoglycolate + (2R)-3-phosphoglycerate + 2 H(+). In terms of biological role, ruBisCO catalyzes two reactions: the carboxylation of D-ribulose 1,5-bisphosphate, the primary event in carbon dioxide fixation, as well as the oxidative fragmentation of the pentose substrate in the photorespiration process. Both reactions occur simultaneously and in competition at the same active site. The protein is Ribulose bisphosphate carboxylase large chain of Dendrophthora clavata (Columbian mistletoe).